A 270-amino-acid polypeptide reads, in one-letter code: 4-hydroxy-tetrahydrodipicolinate reductase (270 aa).

NAD(+) contacts are provided by residues 8-13 (GALGRM), D34, 102-104 (GTT), and 128-131 (SQNY). H160 functions as the Proton donor/acceptor in the catalytic mechanism. H161 provides a ligand contact to (S)-2,3,4,5-tetrahydrodipicolinate. Residue K164 is the Proton donor of the active site. Residue 170 to 171 (GT) participates in (S)-2,3,4,5-tetrahydrodipicolinate binding.

This sequence belongs to the DapB family.

Its subcellular location is the cytoplasm. It catalyses the reaction (S)-2,3,4,5-tetrahydrodipicolinate + NAD(+) + H2O = (2S,4S)-4-hydroxy-2,3,4,5-tetrahydrodipicolinate + NADH + H(+). The enzyme catalyses (S)-2,3,4,5-tetrahydrodipicolinate + NADP(+) + H2O = (2S,4S)-4-hydroxy-2,3,4,5-tetrahydrodipicolinate + NADPH + H(+). It participates in amino-acid biosynthesis; L-lysine biosynthesis via DAP pathway; (S)-tetrahydrodipicolinate from L-aspartate: step 4/4. In terms of biological role, catalyzes the conversion of 4-hydroxy-tetrahydrodipicolinate (HTPA) to tetrahydrodipicolinate. The chain is 4-hydroxy-tetrahydrodipicolinate reductase from Methanococcus maripaludis (strain C7 / ATCC BAA-1331).